Here is a 218-residue protein sequence, read N- to C-terminus: Flagellar calcium-binding protein TB-24 (218 aa).

The segment at 1-27 (MGCSASKDTTNSKDGAASKGGKDGKTT) is disordered. 4 EF-hand domains span residues 48–83 (ESKSRRIELFKQFDTNGTGKLGFREVLDGCYGILKL), 84–119 (DEFTTHLPDIVQRAFDKAKDLGNKVKGVGEEDLVEF), 130–165 (YDIFELTVMFDTMDKDGSLLLELQEFKEALPKLKEW), and 167–202 (VDITDATTVFNEIDTNGSGVVTFDEFSCWAVTKKLQ). Ca(2+) is bound by residues Asp61, Asn63, Thr65, Lys67, and Glu72. Ca(2+) contacts are provided by Asp143, Asp145, Ser147, Glu154, Asp180, Asn182, Ser184, and Glu191.

The protein belongs to the calflagin family.

The protein resides in the cell projection. It is found in the cilium. Its subcellular location is the flagellum. May contribute to the rapid motility of the trypanosomes, playing a role either in flagellar structure or in calcium metabolism. Could alternate between a GDP-bound inactive form to a calcium/GTP-bound active form. In Trypanosoma brucei brucei, this protein is Flagellar calcium-binding protein TB-24.